Consider the following 149-residue polypeptide: Nucleoside diphosphate kinase (149 aa).

Lys-9, Phe-57, Arg-85, Thr-91, Arg-102, and Asn-112 together coordinate ATP. His-115 acts as the Pros-phosphohistidine intermediate in catalysis.

It belongs to the NDK family. Homotetramer. Requires Mg(2+) as cofactor.

It localises to the cytoplasm. The enzyme catalyses a 2'-deoxyribonucleoside 5'-diphosphate + ATP = a 2'-deoxyribonucleoside 5'-triphosphate + ADP. It catalyses the reaction a ribonucleoside 5'-diphosphate + ATP = a ribonucleoside 5'-triphosphate + ADP. In terms of biological role, major role in the synthesis of nucleoside triphosphates other than ATP. The ATP gamma phosphate is transferred to the NDP beta phosphate via a ping-pong mechanism, using a phosphorylated active-site intermediate. This Nostoc punctiforme (strain ATCC 29133 / PCC 73102) protein is Nucleoside diphosphate kinase.